The sequence spans 70 residues: Conotoxin ArMKLT2-0112 (70 aa).

A signal peptide spans 1–22 (MKLTCVLIIAVLFLTACQLTTG). The propeptide occupies 23 to 40 (EQKDHALRSTDKNSKLTR). A Pyrrolidone carboxylic acid modification is found at Gln-41. 3 disulfides stabilise this stretch: Cys-42-Cys-56, Cys-49-Cys-60, and Cys-55-Cys-67.

Belongs to the conotoxin O1 superfamily. In terms of tissue distribution, expressed by the venom duct.

It localises to the secreted. The polypeptide is Conotoxin ArMKLT2-0112 (Conus arenatus (Sand-dusted cone)).